Here is a 282-residue protein sequence, read N- to C-terminus: tRNA pseudouridine synthase A (282 aa).

Residue D53 is the Nucleophile of the active site. Y119 serves as a coordination point for substrate.

This sequence belongs to the tRNA pseudouridine synthase TruA family. In terms of assembly, homodimer.

It carries out the reaction uridine(38/39/40) in tRNA = pseudouridine(38/39/40) in tRNA. Functionally, formation of pseudouridine at positions 38, 39 and 40 in the anticodon stem and loop of transfer RNAs. This Corynebacterium efficiens (strain DSM 44549 / YS-314 / AJ 12310 / JCM 11189 / NBRC 100395) protein is tRNA pseudouridine synthase A.